The primary structure comprises 134 residues: Neuropeptide-like peptide 11 (134 aa).

The signal sequence occupies residues 1 to 20; the sequence is MMSTLALVSLAIFGIAVVCA. A propeptide spanning residues 21–106 is cleaved from the precursor; that stretch reads APKPATVPVA…YNRLIDAGKK (86 aa). A131 bears the Alanine amide mark.

In Caenorhabditis elegans, this protein is Neuropeptide-like peptide 11 (nlp-11).